Consider the following 152-residue polypeptide: Large-conductance mechanosensitive channel (152 aa).

2 helical membrane-spanning segments follow: residues 14-34 (VIDL…VTSL) and 81-101 (GLFL…FIVI).

This sequence belongs to the MscL family. Homopentamer.

Its subcellular location is the cell membrane. Channel that opens in response to stretch forces in the membrane lipid bilayer. May participate in the regulation of osmotic pressure changes within the cell. This is Large-conductance mechanosensitive channel from Clostridium perfringens (strain ATCC 13124 / DSM 756 / JCM 1290 / NCIMB 6125 / NCTC 8237 / Type A).